Consider the following 415-residue polypeptide: uncharacterized protein (415 aa).

Positions 276 and 316 each coordinate [4Fe-4S] cluster.

As to quaternary structure, homodimer. Requires [4Fe-4S] cluster as cofactor.

This is an uncharacterized protein from Methanocaldococcus jannaschii (strain ATCC 43067 / DSM 2661 / JAL-1 / JCM 10045 / NBRC 100440) (Methanococcus jannaschii).